The primary structure comprises 336 residues: NADH-quinone oxidoreductase subunit H (336 aa).

8 helical membrane passes run 4–24, 75–95, 108–128, 154–174, 181–201, 233–253, 272–292, and 308–328; these read YILW…LVVA, YLFF…WAVI, LGLL…VIAG, MGFA…TGII, LWHW…IAGI, LFFL…SIMF, FVPG…MFLW, and LGWK…ACMV.

The protein belongs to the complex I subunit 1 family. As to quaternary structure, NDH-1 is composed of 14 different subunits. Subunits NuoA, H, J, K, L, M, N constitute the membrane sector of the complex.

The protein resides in the cell inner membrane. The enzyme catalyses a quinone + NADH + 5 H(+)(in) = a quinol + NAD(+) + 4 H(+)(out). In terms of biological role, NDH-1 shuttles electrons from NADH, via FMN and iron-sulfur (Fe-S) centers, to quinones in the respiratory chain. The immediate electron acceptor for the enzyme in this species is believed to be ubiquinone. Couples the redox reaction to proton translocation (for every two electrons transferred, four hydrogen ions are translocated across the cytoplasmic membrane), and thus conserves the redox energy in a proton gradient. This subunit may bind ubiquinone. The sequence is that of NADH-quinone oxidoreductase subunit H from Francisella philomiragia subsp. philomiragia (strain ATCC 25017 / CCUG 19701 / FSC 153 / O#319-036).